Reading from the N-terminus, the 135-residue chain is MIREFSSLQNDIINIQEHYSLNNNMDVRGDHNRKNTSFRGSAPAPIMGKQELFRTLSSQNSPRRLISASYFSLESMVVLVGLTASLLILPLILPPLPPPPFMLLLIPIGIMVLLMVLAFMPSSNSKHVSSSSTFM.

Residues 71–122 (FSLESMVVLVGLTASLLILPLILPPLPPPPFMLLLIPIGIMVLLMVLAFMPS) form an organ Size Related (OSR) domain region. The next 2 membrane-spanning stretches (helical) occupy residues 76 to 96 (MVVL…LPPL) and 100 to 120 (PFML…LAFM).

The protein belongs to the plant organ size related (OSR) protein family. In terms of tissue distribution, expressed in cotyledons, roots, flowers, siliques and leaves.

Its subcellular location is the membrane. It localises to the nucleus. The protein resides in the cytoplasm. It is found in the endoplasmic reticulum. Its function is as follows. Promotes cell expansion-dependent organ growth, probably via a brassinosteroids signaling pathway. Acts downstream of BRI1. The polypeptide is ARGOS-like protein (ARL) (Arabidopsis thaliana (Mouse-ear cress)).